The sequence spans 929 residues: Band 4.1-like protein 3 (929 aa).

Position 1 is an N-acetylmethionine (M1). Residues 1–72 are disordered; it reads MTTESGSDSE…STPVKREIGD (72 aa). At T2 the chain carries N-acetylthreonine; in Band 4.1-like protein 3, N-terminally processed. Low complexity predominate over residues 20–33; sequence QEAAGPQGQAGAQP. At S96 the chain carries Phosphoserine. The 282-residue stretch at 118 to 399 folds into the FERM domain; it reads MQCKVTLLDG…EHHTFFRLLL (282 aa). Positions 402-528 are hydrophilic; that stretch reads APPKKFLTLG…PVTALRHEGK (127 aa). 3 positions are modified to phosphoserine: S428, S451, and S486. A disordered region spans residues 490-554; that stretch reads LITTVTPEKK…TESDQEEDAE (65 aa). A Phosphothreonine modification is found at T495. The segment covering 496-516 has biased composition (basic and acidic residues); sequence PEKKAEEERVEEEDRRKKAEE. T518 is subject to Phosphothreonine. Positions 523–536 are enriched in basic and acidic residues; it reads LRHEGKTDSERTDT. Residues H525 and S543 each carry the phosphoserine modification. Residue T545 is modified to Phosphothreonine. S547 is subject to Phosphoserine. The tract at residues 559–602 is spectrin--actin-binding; that stretch reads DLDKTQDELMKHQTNISELKRTFLETSTETALTNEWEKRLSTSP. Disordered regions lie at residues 608–630, 665–689, and 705–807; these read RQED…SGEK, LETK…STEK, and VHAS…SPGG. The residue at position 725 (T725) is a Phosphothreonine. The span at 726–737 shows a compositional bias: basic and acidic residues; it reads PTDRRHTGKGKE. Residues 777–929 are C-terminal (CTD); it reads RTSEGLEQKS…TEITPEDGED (153 aa). The span at 789-802 shows a compositional bias: low complexity; it reads ESSTVRVESTSVGS. 2 positions are modified to phosphoserine: S802 and S804. T923 carries the post-translational modification Phosphothreonine.

In terms of assembly, interacts (via FERM domain) with CADM1. Interacts (via FERM domain) with PRMT3; the interaction is direct and inhibits the protein-arginine N-methyltransferase activity of PRMT3. Interacts with PRMT5. Interacts with PRMT6. As to quaternary structure, has the complete spectrin--actin-binding (SAB) domain and fully interacts with spectrin and actin. As to expression, detected in brain (at protein level). Highest expression in brain, lower in testis, adrenal gland, heart and kidney. Also present in muscle and epithelial cells. Isoform 1 is expressed in brain, isoform 2 is expressed in heart and isoform 3 is mostly expressed in kidney but also in heart and brain. Isoform 6 seems to be most abundant in kidney while isoform 4 and isoform 5 are predominantly expressed in heart and brain.

Its subcellular location is the cytoplasm. It is found in the cytoskeleton. It localises to the cell membrane. The protein localises to the cell junction. Tumor suppressor that inhibits cell proliferation and promotes apoptosis. Modulates the activity of protein arginine N-methyltransferases, including PRMT3 and PRMT5. This is Band 4.1-like protein 3 from Mus musculus (Mouse).